Consider the following 115-residue polypeptide: Large ribosomal subunit protein bL20 (115 aa).

The protein belongs to the bacterial ribosomal protein bL20 family.

Functionally, binds directly to 23S ribosomal RNA and is necessary for the in vitro assembly process of the 50S ribosomal subunit. It is not involved in the protein synthesizing functions of that subunit. This chain is Large ribosomal subunit protein bL20, found in Myxococcus xanthus (strain DK1622).